The sequence spans 136 residues: Large ribosomal subunit protein bL21 (136 aa).

It belongs to the bacterial ribosomal protein bL21 family. In terms of assembly, part of the 50S ribosomal subunit. Contacts protein L20.

This protein binds to 23S rRNA in the presence of protein L20. This is Large ribosomal subunit protein bL21 from Trichodesmium erythraeum (strain IMS101).